A 211-amino-acid polypeptide reads, in one-letter code: Riboflavin kinase (211 aa).

Residues 1-81 are H-T-H motif-like; sequence MKCIDRRLIG…DLLRYFNILS (81 aa). Residues 82–211 are riboflavin kinase; the sequence is IRLSGRVVSG…DRVEIEIYLE (130 aa). 91–96 is a binding site for CDP; that stretch reads GLGEGA. Mg(2+) contacts are provided by T120 and N122. Positions 177 and 185 each coordinate FMN. 190–193 contributes to the CDP binding site; that stretch reads FKLR.

The protein belongs to the archaeal riboflavin kinase family. The cofactor is Mg(2+).

It catalyses the reaction riboflavin + CTP = CDP + FMN + H(+). It functions in the pathway cofactor biosynthesis; FMN biosynthesis; FMN from riboflavin (CTP route): step 1/1. Functionally, catalyzes the CTP-dependent phosphorylation of riboflavin (vitamin B2) to form flavin mononucleotide (FMN). The chain is Riboflavin kinase (ribK) from Pyrobaculum islandicum (strain DSM 4184 / JCM 9189 / GEO3).